Here is a 492-residue protein sequence, read N- to C-terminus: Glutamyl-tRNA(Gln) amidotransferase subunit A (492 aa).

Active-site charge relay system residues include Lys-80 and Ser-155. The active-site Acyl-ester intermediate is Ser-179.

It belongs to the amidase family. GatA subfamily. As to quaternary structure, heterotrimer of A, B and C subunits.

It carries out the reaction L-glutamyl-tRNA(Gln) + L-glutamine + ATP + H2O = L-glutaminyl-tRNA(Gln) + L-glutamate + ADP + phosphate + H(+). Its function is as follows. Allows the formation of correctly charged Gln-tRNA(Gln) through the transamidation of misacylated Glu-tRNA(Gln) in organisms which lack glutaminyl-tRNA synthetase. The reaction takes place in the presence of glutamine and ATP through an activated gamma-phospho-Glu-tRNA(Gln). The protein is Glutamyl-tRNA(Gln) amidotransferase subunit A of Mycobacteroides abscessus (strain ATCC 19977 / DSM 44196 / CCUG 20993 / CIP 104536 / JCM 13569 / NCTC 13031 / TMC 1543 / L948) (Mycobacterium abscessus).